A 574-amino-acid chain; its full sequence is uncharacterized protein (574 aa).

The next 11 membrane-spanning stretches (helical) occupy residues 14-34 (FFPTLWLILAPLILSPLLFFG), 54-74 (VVPLAVTSFIPMIALPFLGIV), 124-144 (WLMAGFMIITSFISLWISDTA), 205-225 (ICKCMMLLVAHASLIGGTGTI), 253-273 (SWMAFAIPPMIFYMFSSWFIV), 323-343 (LVIFVLAVLSWVSSDPKVIPG), 350-370 (KGYVTDSCSGLVAVFLLFIWP), 403-423 (FPWSIILLLGAGFAISDAVRV), 441-461 (MPFFVMQIILSIVVVVMTEFS), 485-505 (PLYFSIPTAIGPSFSFMLPMA), and 520-540 (MIDMVSCGVFLNIFCIAITAI). 2 N-linked (GlcNAc...) asparagine glycosylation sites follow: N565 and N569.

The protein belongs to the SLC13A/DASS transporter (TC 2.A.47) family. NADC subfamily.

It is found in the membrane. This is an uncharacterized protein from Caenorhabditis elegans.